A 150-amino-acid chain; its full sequence is UPF0178 protein Maqu_2186 (150 aa).

Belongs to the UPF0178 family.

This is UPF0178 protein Maqu_2186 from Marinobacter nauticus (strain ATCC 700491 / DSM 11845 / VT8) (Marinobacter aquaeolei).